The chain runs to 271 residues: Aquaporin-2 (271 aa).

The Cytoplasmic segment spans residues 1-11 (MWELRSIAFSR). Residues 12–32 (AVLAEFLATLLFVFFGLGSAL) form a helical membrane-spanning segment. At 33–40 (QWASSPPS) the chain is on the extracellular side. Residues 41-59 (VLQIAVAFGLGIGILVQAL) traverse the membrane as a helical segment. Residues 60–64 (GHVSG) are Cytoplasmic-facing. Residues 65–74 (AHINPAVTVA) constitute an intramembrane region (discontinuously helical). An NPA 1 motif is present at residues 68–70 (NPA). Topologically, residues 75–85 (CLVGCHVSFLR) are cytoplasmic. Residues 86-107 (AAFYVAAQLLGAVAGAAILHEI) traverse the membrane as a helical segment. Residues 108-127 (TPVEIRGDLAVNALHNNATA) are Extracellular-facing. A glycan (N-linked (GlcNAc...) asparagine) is linked at N124. Residues 128-148 (GQAVTVELFLTMQLVLCIFAS) form a helical membrane-spanning segment. Topologically, residues 149 to 156 (TDERRGDN) are cytoplasmic. A helical transmembrane segment spans residues 157 to 176 (LGSPALSIGFSVTLGHLLGI). Topologically, residues 177 to 180 (YFTG) are extracellular. Positions 181-193 (CSMNPARSLAPAV) form an intramembrane region, discontinuously helical. Positions 184 to 186 (NPA) match the NPA 2 motif. Over 194–201 (VTGKFDDH) the chain is Extracellular. A helical membrane pass occupies residues 202 to 222 (WVFWIGPLVGAIIGSLLYNYL). The Cytoplasmic segment spans residues 223–271 (LFPSAKSLQERLAVLKGLEPDTDWEEREVRRRQSVELHSPQSLPRGSKA). Residues 251–271 (VRRRQSVELHSPQSLPRGSKA) form a disordered region. S256, S261, S264, and S269 each carry phosphoserine. Residues 261–271 (SPQSLPRGSKA) show a composition bias toward polar residues.

It belongs to the MIP/aquaporin (TC 1.A.8) family. As to quaternary structure, homotetramer. Ser-256 phosphorylation is necessary and sufficient for expression at the apical membrane. Endocytosis is not phosphorylation-dependent. Post-translationally, N-glycosylated. Detected in kidney, in cortical and the medullary collecting tubules (at protein level). Detected in kidney medulla and cortex.

The protein localises to the apical cell membrane. The protein resides in the basolateral cell membrane. It localises to the cell membrane. It is found in the cytoplasmic vesicle membrane. Its subcellular location is the golgi apparatus. The protein localises to the trans-Golgi network membrane. It catalyses the reaction H2O(in) = H2O(out). The catalysed reaction is glycerol(in) = glycerol(out). Functionally, forms a water-specific channel that provides the plasma membranes of renal collecting duct with high permeability to water, thereby permitting water to move in the direction of an osmotic gradient. Plays an essential role in renal water homeostasis. Could also be permeable to glycerol. This chain is Aquaporin-2, found in Rattus norvegicus (Rat).